The primary structure comprises 277 residues: Phosphate import ATP-binding protein PstB 1 (277 aa).

The ABC transporter domain occupies 27–272; that stretch reads LRVRDLAVSY…PSHELTAAYI (246 aa). 59–66 provides a ligand contact to ATP; that stretch reads GPSGCGKT.

This sequence belongs to the ABC transporter superfamily. Phosphate importer (TC 3.A.1.7) family. The complex is composed of two ATP-binding proteins (PstB), two transmembrane proteins (PstC and PstA) and a solute-binding protein (PstS).

It is found in the cell inner membrane. The catalysed reaction is phosphate(out) + ATP + H2O = ADP + 2 phosphate(in) + H(+). Part of the ABC transporter complex PstSACB involved in phosphate import. Responsible for energy coupling to the transport system. The chain is Phosphate import ATP-binding protein PstB 1 from Nitrosococcus oceani (strain ATCC 19707 / BCRC 17464 / JCM 30415 / NCIMB 11848 / C-107).